Reading from the N-terminus, the 371-residue chain is Chaperone protein DnaJ (371 aa).

Residues 5–69 (DYYEVLGLSK…QKRAQYDQFG (65 aa)) form the J domain. The segment at 133–215 (GKELNVEIPV…CHGSGKVRKR (83 aa)) adopts a CR-type zinc-finger fold. Residues Cys-146, Cys-149, Cys-163, Cys-166, Cys-189, Cys-192, Cys-203, and Cys-206 each contribute to the Zn(2+) site. 4 CXXCXGXG motif repeats span residues 146 to 153 (CDTCKGSG), 163 to 170 (CKHCSGSG), 189 to 196 (CGHCSGTG), and 203 to 210 (CTTCHGSG).

Belongs to the DnaJ family. In terms of assembly, homodimer. Requires Zn(2+) as cofactor.

Its subcellular location is the cytoplasm. Its function is as follows. Participates actively in the response to hyperosmotic and heat shock by preventing the aggregation of stress-denatured proteins and by disaggregating proteins, also in an autonomous, DnaK-independent fashion. Unfolded proteins bind initially to DnaJ; upon interaction with the DnaJ-bound protein, DnaK hydrolyzes its bound ATP, resulting in the formation of a stable complex. GrpE releases ADP from DnaK; ATP binding to DnaK triggers the release of the substrate protein, thus completing the reaction cycle. Several rounds of ATP-dependent interactions between DnaJ, DnaK and GrpE are required for fully efficient folding. Also involved, together with DnaK and GrpE, in the DNA replication of plasmids through activation of initiation proteins. The sequence is that of Chaperone protein DnaJ from Bacillus cereus (strain ATCC 10987 / NRS 248).